Here is a 66-residue protein sequence, read N- to C-terminus: Large ribosomal subunit protein bL33c (66 aa).

It belongs to the bacterial ribosomal protein bL33 family.

It is found in the plastid. The protein localises to the chloroplast. This chain is Large ribosomal subunit protein bL33c, found in Manihot esculenta (Cassava).